A 332-amino-acid chain; its full sequence is NADH-quinone oxidoreductase subunit H (332 aa).

9 helical membrane passes run 4–24 (FAFF…IFAS), 44–64 (IGPD…MIKL), 78–98 (FIFA…LAAI), 120–140 (VALL…FLGG), 165–185 (VGAL…LVDI), 194–214 (FSWL…ALFI), 255–275 (IAGA…FWII), 279–299 (IMMI…RAAF), and 312–332 (YLIL…AVLL).

Belongs to the complex I subunit 1 family. NDH-1 is composed of 14 different subunits. Subunits NuoA, H, J, K, L, M, N constitute the membrane sector of the complex.

The protein resides in the cell inner membrane. It carries out the reaction a quinone + NADH + 5 H(+)(in) = a quinol + NAD(+) + 4 H(+)(out). Functionally, NDH-1 shuttles electrons from NADH, via FMN and iron-sulfur (Fe-S) centers, to quinones in the respiratory chain. The immediate electron acceptor for the enzyme in this species is believed to be ubiquinone. Couples the redox reaction to proton translocation (for every two electrons transferred, four hydrogen ions are translocated across the cytoplasmic membrane), and thus conserves the redox energy in a proton gradient. This subunit may bind ubiquinone. This chain is NADH-quinone oxidoreductase subunit H, found in Campylobacter jejuni (strain RM1221).